Here is a 518-residue protein sequence, read N- to C-terminus: Pumilio homolog 14 (518 aa).

Disordered regions lie at residues 26–46 (TMAS…QPEN) and 77–114 (VGQN…PPMG). Low complexity predominate over residues 29–44 (SSSSQPQPISSPFHQP). Positions 178–518 (YTNRFGYEGY…GNKVLEKLNI (341 aa)) constitute a PUM-HD domain. A Pumilio 1; degenerate repeat occupies 206 to 235 (SAFAKDKEMSERLGMSIFQGTKETVDAIYN). 7 Pumilio repeats span residues 236–271 (GLIG…QLVD), 275–313 (QQMF…RIVD), 314–348 (VVRT…LLLE), 349–387 (LIVQ…RLIM), 388–423 (EAIA…ALVR), 424–459 (QLIG…IVID), and 460–494 (LLRE…MLRY).

It is found in the cytoplasm. It localises to the nucleus. In terms of biological role, sequence-specific RNA-binding protein that regulates translation and mRNA stability by binding the 3'-UTR of target mRNAs. The sequence is that of Pumilio homolog 14 (APUM14) from Arabidopsis thaliana (Mouse-ear cress).